The chain runs to 294 residues: Protoheme IX farnesyltransferase (294 aa).

Transmembrane regions (helical) follow at residues 25–45, 48–68, 92–112, 115–135, 141–161, 170–190, 216–236, 240–260, and 272–292; these read SLVLVTAAGGMWLAPGHMGAV, LVTLLATAGTVGAANALNCYW, AVALWFGISLAAVSLPALALG, VLTAALGLVALLSYVLAYTPL, AAMLVGGVPGALPPLMGWTAV, FSLFAIMFLWQMPHFIAIALF, VVLYLVALIPMTLLPFQLHIA, YLAAAVLLGLSFLGLGAWGFF, and FFFSLIYLTGLFAALALDRVP.

Belongs to the UbiA prenyltransferase family. Protoheme IX farnesyltransferase subfamily.

The protein resides in the cell inner membrane. It catalyses the reaction heme b + (2E,6E)-farnesyl diphosphate + H2O = Fe(II)-heme o + diphosphate. It participates in porphyrin-containing compound metabolism; heme O biosynthesis; heme O from protoheme: step 1/1. Functionally, converts heme B (protoheme IX) to heme O by substitution of the vinyl group on carbon 2 of heme B porphyrin ring with a hydroxyethyl farnesyl side group. This Myxococcus xanthus (strain DK1622) protein is Protoheme IX farnesyltransferase.